The chain runs to 172 residues: Ribosome maturation factor RimM (172 aa).

Residues 100-172 (PGEYYRVDLV…RIVVDWDPGF (73 aa)) form the PRC barrel domain.

This sequence belongs to the RimM family. In terms of assembly, binds ribosomal protein uS19.

It is found in the cytoplasm. An accessory protein needed during the final step in the assembly of 30S ribosomal subunit, possibly for assembly of the head region. Essential for efficient processing of 16S rRNA. May be needed both before and after RbfA during the maturation of 16S rRNA. It has affinity for free ribosomal 30S subunits but not for 70S ribosomes. This chain is Ribosome maturation factor RimM, found in Methylococcus capsulatus (strain ATCC 33009 / NCIMB 11132 / Bath).